A 498-amino-acid chain; its full sequence is Probable cytosol aminopeptidase (498 aa).

Mn(2+)-binding residues include lysine 264 and aspartate 269. The active site involves lysine 276. Mn(2+) contacts are provided by aspartate 287, aspartate 346, and glutamate 348. Arginine 350 is an active-site residue.

Belongs to the peptidase M17 family. Requires Mn(2+) as cofactor.

It is found in the cytoplasm. It carries out the reaction Release of an N-terminal amino acid, Xaa-|-Yaa-, in which Xaa is preferably Leu, but may be other amino acids including Pro although not Arg or Lys, and Yaa may be Pro. Amino acid amides and methyl esters are also readily hydrolyzed, but rates on arylamides are exceedingly low.. The catalysed reaction is Release of an N-terminal amino acid, preferentially leucine, but not glutamic or aspartic acids.. In terms of biological role, presumably involved in the processing and regular turnover of intracellular proteins. Catalyzes the removal of unsubstituted N-terminal amino acids from various peptides. The protein is Probable cytosol aminopeptidase of Xanthobacter autotrophicus (strain ATCC BAA-1158 / Py2).